The sequence spans 120 residues: NAD(P)H-quinone oxidoreductase subunit 3, chloroplastic (120 aa).

Transmembrane regions (helical) follow at residues 9–29, 64–84, and 88–108; these read IFWTFLIIASLIPILAFSISG, MFALVFVVFDVETVFLYPWAM, and VLGVSVFIEALIFVLILVVGL.

Belongs to the complex I subunit 3 family. As to quaternary structure, NDH is composed of at least 16 different subunits, 5 of which are encoded in the nucleus.

It localises to the plastid. Its subcellular location is the chloroplast thylakoid membrane. The enzyme catalyses a plastoquinone + NADH + (n+1) H(+)(in) = a plastoquinol + NAD(+) + n H(+)(out). The catalysed reaction is a plastoquinone + NADPH + (n+1) H(+)(in) = a plastoquinol + NADP(+) + n H(+)(out). In terms of biological role, NDH shuttles electrons from NAD(P)H:plastoquinone, via FMN and iron-sulfur (Fe-S) centers, to quinones in the photosynthetic chain and possibly in a chloroplast respiratory chain. The immediate electron acceptor for the enzyme in this species is believed to be plastoquinone. Couples the redox reaction to proton translocation, and thus conserves the redox energy in a proton gradient. This Hordeum vulgare (Barley) protein is NAD(P)H-quinone oxidoreductase subunit 3, chloroplastic.